A 292-amino-acid chain; its full sequence is Undecaprenyl-diphosphatase (292 aa).

Helical transmembrane passes span 1–21, 46–66, 88–108, 114–134, 192–212, 225–245, and 253–273; these read MSLV…FLPV, FVTI…RADI, ARLG…GKLL, ALGN…LLAA, FLLS…STVP, VVGT…LLAW, and VFVV…LSGV.

Belongs to the UppP family.

Its subcellular location is the cell inner membrane. The enzyme catalyses di-trans,octa-cis-undecaprenyl diphosphate + H2O = di-trans,octa-cis-undecaprenyl phosphate + phosphate + H(+). Its function is as follows. Catalyzes the dephosphorylation of undecaprenyl diphosphate (UPP). Confers resistance to bacitracin. This Anaeromyxobacter dehalogenans (strain 2CP-C) protein is Undecaprenyl-diphosphatase.